The primary structure comprises 477 residues: Cytoplasmic 60S subunit biogenesis factor ZNF622 (477 aa).

Ala2 carries the N-acetylalanine modification. U1-type zinc fingers lie at residues 4–28 (YTCI…TDWH) and 67–91 (TYCT…SRRH). The segment at 135–212 (AIKAQPSMSP…EDLDGDDWED (78 aa)) is disordered. Residues 167 to 178 (GTHDRDPSEKPP) show a composition bias toward basic and acidic residues. The segment covering 196–212 (EDSEEEEEDLDGDDWED) has biased composition (acidic residues). Position 276 is a phosphoserine (Ser276).

It belongs to the REI1 family. In terms of assembly, homo- and heterodimer. Associates with pre-60S ribosomal particles. Interacts with MELK and MYBL2. Interacts with DNAJC21. Post-translationally, phosphorylated by MELK. The phosphorylation may redirect the protein to the nucleus. Ubiquitinated by HECTD1, leading to its degradation. In terms of tissue distribution, expressed in lung, kidney, spleen, liver and brain with lowest expression in kidney.

It localises to the cytoplasm. The protein localises to the nucleus. Its function is as follows. Pre-60S-associated cytoplasmic factor involved in the cytoplasmic maturation of the 60S subunit. This is Cytoplasmic 60S subunit biogenesis factor ZNF622 from Homo sapiens (Human).